The sequence spans 141 residues: Large ribosomal subunit protein uL11 (141 aa).

The protein belongs to the universal ribosomal protein uL11 family. In terms of assembly, part of the ribosomal stalk of the 50S ribosomal subunit. Interacts with L10 and the large rRNA to form the base of the stalk. L10 forms an elongated spine to which L12 dimers bind in a sequential fashion forming a multimeric L10(L12)X complex. In terms of processing, one or more lysine residues are methylated.

Forms part of the ribosomal stalk which helps the ribosome interact with GTP-bound translation factors. The protein is Large ribosomal subunit protein uL11 of Streptococcus agalactiae serotype Ia (strain ATCC 27591 / A909 / CDC SS700).